Here is a 172-residue protein sequence, read N- to C-terminus: NADH-ubiquinone oxidoreductase chain 6 (172 aa).

A run of 5 helical transmembrane segments spans residues 1–21, 26–48, 52–74, 86–106, and 147–167; these read MTNY…GLAL, IYGG…GFGG, GLMV…TAMA, WFIF…FYLF, and CATW…FIII.

This sequence belongs to the complex I subunit 6 family. As to quaternary structure, core subunit of respiratory chain NADH dehydrogenase (Complex I) which is composed of 45 different subunits.

It is found in the mitochondrion inner membrane. The catalysed reaction is a ubiquinone + NADH + 5 H(+)(in) = a ubiquinol + NAD(+) + 4 H(+)(out). Core subunit of the mitochondrial membrane respiratory chain NADH dehydrogenase (Complex I) which catalyzes electron transfer from NADH through the respiratory chain, using ubiquinone as an electron acceptor. Essential for the catalytic activity and assembly of complex I. This is NADH-ubiquinone oxidoreductase chain 6 from Rattus norvegicus (Rat).